The sequence spans 133 residues: Thioredoxin-2, mitochondrial (133 aa).

A mitochondrion-targeting transit peptide spans 1-29 (MRGFIANSLKPHMRSFALRRSFTSSRILR). The 104-residue stretch at 30-133 (KVNAVESFGD…LSSLLAKYQE (104 aa)) folds into the Thioredoxin domain. Residues C59 and C62 each act as nucleophile in the active site. C59 and C62 are oxidised to a cystine.

The protein belongs to the thioredoxin family. Interacts with arg3.

Its subcellular location is the mitochondrion. In terms of biological role, disulfide reductase which serves multiple functions in mitochondria, protecting mitochondrial components against thiol-oxidative damage as a thiol-disulfide oxidoreductase, and supporting urea cycle and respiration in mitochondria in a manner independent of active site thiols. This chain is Thioredoxin-2, mitochondrial (trx2), found in Schizosaccharomyces pombe (strain 972 / ATCC 24843) (Fission yeast).